Here is a 312-residue protein sequence, read N- to C-terminus: Malate dehydrogenase (312 aa).

Residues 7-13 (GAAGGIG) and D34 each bind NAD(+). Residues R81 and R87 each contribute to the substrate site. NAD(+)-binding positions include N94 and 117 to 119 (ITN). Substrate-binding residues include N119 and R153. The Proton acceptor role is filled by H177. M227 serves as a coordination point for NAD(+).

Belongs to the LDH/MDH superfamily. MDH type 1 family. As to quaternary structure, homodimer.

The catalysed reaction is (S)-malate + NAD(+) = oxaloacetate + NADH + H(+). Its function is as follows. Catalyzes the reversible oxidation of malate to oxaloacetate. The sequence is that of Malate dehydrogenase from Shigella flexneri serotype 5b (strain 8401).